The sequence spans 557 residues: Suprabasin (557 aa).

An N-terminal signal peptide occupies residues 1-23 (MHLASLLSSCSLLLLLGALPGWA). 4 disordered regions span residues 150-175 (RFGQGAHHATGQAGKEAEKFGQGAHH), 422-441 (GQGAHHAAEQAGKQAGKVAQ), 464-490 (AAGQAGKEAEKLGQGVHHAAGQAGKQE), and 509-533 (NQLLNDGHPGGSTTQHGGAATTTLT). Low complexity predominate over residues 153–175 (QGAHHATGQAGKEAEKFGQGAHH). Low complexity predominate over residues 476-487 (GQGVHHAAGQAG).

The protein resides in the secreted. This chain is Suprabasin (SBSN), found in Bos taurus (Bovine).